The following is a 341-amino-acid chain: Protein pelota homolog (341 aa).

The protein belongs to the eukaryotic release factor 1 family. Pelota subfamily. In terms of assembly, monomer. A divalent metal cation is required as a cofactor.

It is found in the cytoplasm. In terms of biological role, may function in recognizing stalled ribosomes, interact with stem-loop structures in stalled mRNA molecules, and effect endonucleolytic cleavage of the mRNA. May play a role in the release non-functional ribosomes and degradation of damaged mRNAs. Has endoribonuclease activity. This is Protein pelota homolog from Methanoregula boonei (strain DSM 21154 / JCM 14090 / 6A8).